Consider the following 113-residue polypeptide: Hydrogenase maturation factor HypA (113 aa).

His2 serves as a coordination point for Ni(2+). Zn(2+) contacts are provided by Cys73, Cys76, Cys89, and Cys92.

The protein belongs to the HypA/HybF family.

In terms of biological role, involved in the maturation of [NiFe] hydrogenases. Required for nickel insertion into the metal center of the hydrogenase. In Bradyrhizobium sp. (strain ORS 278), this protein is Hydrogenase maturation factor HypA.